The following is a 443-amino-acid chain: Probable glycine dehydrogenase (decarboxylating) subunit 1 (443 aa).

Belongs to the GcvP family. N-terminal subunit subfamily. As to quaternary structure, the glycine cleavage system is composed of four proteins: P, T, L and H. In this organism, the P 'protein' is a heterodimer of two subunits.

The catalysed reaction is N(6)-[(R)-lipoyl]-L-lysyl-[glycine-cleavage complex H protein] + glycine + H(+) = N(6)-[(R)-S(8)-aminomethyldihydrolipoyl]-L-lysyl-[glycine-cleavage complex H protein] + CO2. Functionally, the glycine cleavage system catalyzes the degradation of glycine. The P protein binds the alpha-amino group of glycine through its pyridoxal phosphate cofactor; CO(2) is released and the remaining methylamine moiety is then transferred to the lipoamide cofactor of the H protein. The protein is Probable glycine dehydrogenase (decarboxylating) subunit 1 of Endomicrobium trichonymphae.